The following is a 601-amino-acid chain: ATP-dependent lipid A-core flippase (601 aa).

4 helical membrane passes run 27–47 (IGLF…QPML), 83–103 (LLIV…NYFL), 174–194 (LLWM…LIAV), and 267–287 (PLLQ…VLYL). The ABC transmembrane type-1 domain occupies 31–322 (LISIVGFLIF…LSEVSSTIQK (292 aa)). The ABC transporter domain maps to 354–590 (LEVRNLSFTY…NGYYSRLHAM (237 aa)). 388-395 (GRSGSGKS) serves as a coordination point for ATP.

This sequence belongs to the ABC transporter superfamily. Lipid exporter (TC 3.A.1.106) family. Homodimer.

It is found in the cell inner membrane. The catalysed reaction is ATP + H2O + lipid A-core oligosaccharideSide 1 = ADP + phosphate + lipid A-core oligosaccharideSide 2.. Its function is as follows. Involved in lipopolysaccharide (LPS) biosynthesis. Translocates lipid A-core from the inner to the outer leaflet of the inner membrane. Transmembrane domains (TMD) form a pore in the inner membrane and the ATP-binding domain (NBD) is responsible for energy generation. The protein is ATP-dependent lipid A-core flippase of Pseudomonas fluorescens (strain ATCC BAA-477 / NRRL B-23932 / Pf-5).